Here is a 310-residue protein sequence, read N- to C-terminus: DNA repair nuclease APEX1 (310 aa).

Residues 1-51 (MPKRAKKNEEGVDGEADNGTAAAKKEKKGKEPEAPILYEDPPEKLTSKDGR) are disordered. The segment covering 41 to 51 (PPEKLTSKDGR) has biased composition (basic and acidic residues). The Mg(2+) site is built by Asp-63 and Glu-89. Residue Tyr-164 is part of the active site. Residues Asp-203, Asn-205, and Asp-300 each contribute to the Mg(2+) site. Asp-203 acts as the Proton donor/acceptor in catalysis.

This sequence belongs to the DNA repair enzymes AP/ExoA family. Requires Mg(2+) as cofactor. Mn(2+) is required as a cofactor.

Its subcellular location is the nucleus. The protein resides in the nucleolus. It localises to the nucleus speckle. It is found in the endoplasmic reticulum. The protein localises to the cytoplasm. Its subcellular location is the mitochondrion. It catalyses the reaction Exonucleolytic cleavage in the 3'- to 5'-direction to yield nucleoside 5'-phosphates.. Functions as an apurinic/apyrimidinic (AP) endodeoxyribonuclease in the DNA base excision repair (BER) pathway of DNA lesions induced by oxidative and alkylating agents. Initiates repair of AP sites in DNA by catalyzing hydrolytic incision of the phosphodiester backbone immediately adjacent to the damage, generating a single-strand break with 5'-deoxyribose phosphate and 3'-hydroxyl ends. Has 3'-5' exoribonuclease activity on mismatched deoxyribonucleotides at the 3' termini of nicked or gapped DNA molecules during short-patch BER. May also play a role in the epigenetic regulation of gene expression by participating in DNA demethylation. Required for passage through the mid-blastula transition MBT. May also act as an endoribonuclease involved in the control of single-stranded RNA metabolism. Has no redox activity. Binds DNA and RNA. This is DNA repair nuclease APEX1 (apex1) from Danio rerio (Zebrafish).